The primary structure comprises 121 residues: Small ribosomal subunit protein uS13 (121 aa).

Positions Val-97 to Lys-121 are disordered. Over residues Gln-100–Lys-121 the composition is skewed to basic residues.

It belongs to the universal ribosomal protein uS13 family. In terms of assembly, part of the 30S ribosomal subunit. Forms a loose heterodimer with protein S19. Forms two bridges to the 50S subunit in the 70S ribosome.

In terms of biological role, located at the top of the head of the 30S subunit, it contacts several helices of the 16S rRNA. In the 70S ribosome it contacts the 23S rRNA (bridge B1a) and protein L5 of the 50S subunit (bridge B1b), connecting the 2 subunits; these bridges are implicated in subunit movement. Contacts the tRNAs in the A and P-sites. The protein is Small ribosomal subunit protein uS13 of Prochlorococcus marinus (strain MIT 9303).